Reading from the N-terminus, the 555-residue chain is 2-succinyl-5-enolpyruvyl-6-hydroxy-3-cyclohexene-1-carboxylate synthase (555 aa).

The protein belongs to the TPP enzyme family. MenD subfamily. In terms of assembly, homodimer. Mg(2+) serves as cofactor. Requires Mn(2+) as cofactor. The cofactor is thiamine diphosphate.

It catalyses the reaction isochorismate + 2-oxoglutarate + H(+) = 5-enolpyruvoyl-6-hydroxy-2-succinyl-cyclohex-3-ene-1-carboxylate + CO2. It participates in quinol/quinone metabolism; 1,4-dihydroxy-2-naphthoate biosynthesis; 1,4-dihydroxy-2-naphthoate from chorismate: step 2/7. The protein operates within quinol/quinone metabolism; menaquinone biosynthesis. Functionally, catalyzes the thiamine diphosphate-dependent decarboxylation of 2-oxoglutarate and the subsequent addition of the resulting succinic semialdehyde-thiamine pyrophosphate anion to isochorismate to yield 2-succinyl-5-enolpyruvyl-6-hydroxy-3-cyclohexene-1-carboxylate (SEPHCHC). This chain is 2-succinyl-5-enolpyruvyl-6-hydroxy-3-cyclohexene-1-carboxylate synthase, found in Bacteroides fragilis (strain ATCC 25285 / DSM 2151 / CCUG 4856 / JCM 11019 / LMG 10263 / NCTC 9343 / Onslow / VPI 2553 / EN-2).